Here is a 335-residue protein sequence, read N- to C-terminus: Methionine import ATP-binding protein MetN 2 (335 aa).

The 241-residue stretch at 2 to 242 (IEFQNVHKTY…PEHPTTKRFV (241 aa)) folds into the ABC transporter domain. 38–45 (GHSGAGKS) lines the ATP pocket.

The protein belongs to the ABC transporter superfamily. Methionine importer (TC 3.A.1.24) family. As to quaternary structure, the complex is composed of two ATP-binding proteins (MetN), two transmembrane proteins (MetI) and a solute-binding protein (MetQ).

It is found in the cell inner membrane. The catalysed reaction is L-methionine(out) + ATP + H2O = L-methionine(in) + ADP + phosphate + H(+). The enzyme catalyses D-methionine(out) + ATP + H2O = D-methionine(in) + ADP + phosphate + H(+). Functionally, part of the ABC transporter complex MetNIQ involved in methionine import. Responsible for energy coupling to the transport system. This chain is Methionine import ATP-binding protein MetN 2, found in Pseudomonas entomophila (strain L48).